The sequence spans 125 residues: Calcitonin receptor-stimulating peptide 1 (125 aa).

An N-terminal signal peptide occupies residues 1–25 (MGFWKFPPFLVLSILVLYQAGMFHA). A propeptide spanning residues 26 to 77 (APFRSVFDGRFDPATLDEEESRLLLAAMVNDYEQMRARESEKAQKTEGSRIQ) is cleaved from the precursor. Cysteine 81 and cysteine 86 are disulfide-bonded.

The protein belongs to the calcitonin family.

It is found in the secreted. Its function is as follows. Stimulates cAMP production in porcine kidney cell line LLC-PK1 via the calcitonin receptor (CT) but not via the CT-like (CL) receptor. The chain is Calcitonin receptor-stimulating peptide 1 (CRSP1) from Capra hircus (Goat).